We begin with the raw amino-acid sequence, 920 residues long: Phosphoenolpyruvate carboxylase (920 aa).

Catalysis depends on residues H138 and K583.

The protein belongs to the PEPCase type 1 family. Mg(2+) is required as a cofactor.

The catalysed reaction is oxaloacetate + phosphate = phosphoenolpyruvate + hydrogencarbonate. Functionally, forms oxaloacetate, a four-carbon dicarboxylic acid source for the tricarboxylic acid cycle. In Streptococcus pyogenes serotype M1, this protein is Phosphoenolpyruvate carboxylase.